The following is a 45-amino-acid chain: DNA-directed RNA polymerase subunit Rpo12 (45 aa).

Residues cysteine 8, cysteine 23, and cysteine 26 each contribute to the Zn(2+) site.

It belongs to the archaeal Rpo12/eukaryotic RPC10 RNA polymerase subunit family. Part of the RNA polymerase complex. Zn(2+) is required as a cofactor.

It is found in the cytoplasm. It carries out the reaction RNA(n) + a ribonucleoside 5'-triphosphate = RNA(n+1) + diphosphate. Functionally, DNA-dependent RNA polymerase (RNAP) catalyzes the transcription of DNA into RNA using the four ribonucleoside triphosphates as substrates. This Methanocella arvoryzae (strain DSM 22066 / NBRC 105507 / MRE50) protein is DNA-directed RNA polymerase subunit Rpo12.